We begin with the raw amino-acid sequence, 270 residues long: BPI fold-containing family A member 1 (270 aa).

The first 19 residues, 1–19, serve as a signal peptide directing secretion; the sequence is MFLVGSLVVLCGLLAQSTA. Positions 104–109 are important for surfactant activity and antibacterial properties; that stretch reads LVGGLL. A glycan (N-linked (GlcNAc...) asparagine) is linked at Asn-174. An intrachain disulfide couples Cys-196 to Cys-238.

This sequence belongs to the BPI/LBP/Plunc superfamily. Plunc family. In terms of assembly, monomer. Interacts (via N-terminus) with SCNN1B, a subunit of the heterotrimeric epithelial sodium channel (ENaC); this inhibits proteolytic activation of ENaC. Detected in adult nasal epithelium, heart, lung, spleen, testis and salivary gland, and in embryonic nasal epithelium, lung, salivary gland and thymus.

The protein localises to the secreted. In terms of biological role, lipid-binding protein which shows high specificity for the surfactant phospholipid dipalmitoylphosphatidylcholine (DPPC). Plays a role in the innate immune responses of the upper airways. Reduces the surface tension in secretions from airway epithelia and inhibits the formation of biofilm by pathogenic Gram-negative bacteria, such as P.aeruginosa and K.pneumoniae. Negatively regulates proteolytic cleavage of SCNN1G, an event that is required for activation of the epithelial sodium channel (ENaC), and thereby contributes to airway surface liquid homeostasis and proper clearance of mucus. Plays a role in the airway inflammatory response after exposure to irritants. May attract macrophages and neutrophils. This Rattus norvegicus (Rat) protein is BPI fold-containing family A member 1 (Bpifa1).